We begin with the raw amino-acid sequence, 750 residues long: 3-isopropylmalate dehydratase (750 aa).

Positions 353, 413, and 416 each coordinate [4Fe-4S] cluster. The segment at 492–524 is disordered; that stretch reads KYDGSPEVFKSTQDTTPAVKPPQPASDSSSSGG.

This sequence belongs to the aconitase/IPM isomerase family. Monomer. The cofactor is [4Fe-4S] cluster.

The catalysed reaction is (2R,3S)-3-isopropylmalate = (2S)-2-isopropylmalate. Its pathway is amino-acid biosynthesis; L-leucine biosynthesis; L-leucine from 3-methyl-2-oxobutanoate: step 2/4. Its function is as follows. Catalyzes the isomerization between 2-isopropylmalate and 3-isopropylmalate, via the formation of 2-isopropylmaleate. The polypeptide is 3-isopropylmalate dehydratase (LEU1) (Rhizopus niveus).